The following is a 238-amino-acid chain: Pyridoxine 5'-phosphate synthase (238 aa).

3-amino-2-oxopropyl phosphate is bound by residues Asn7 and Arg18. Catalysis depends on His43, which acts as the Proton acceptor. 1-deoxy-D-xylulose 5-phosphate contacts are provided by Arg45 and His50. Glu70 serves as the catalytic Proton acceptor. Residue Thr100 participates in 1-deoxy-D-xylulose 5-phosphate binding. The active-site Proton donor is His190. 3-amino-2-oxopropyl phosphate contacts are provided by residues Asp191 and 213–214 (GH).

This sequence belongs to the PNP synthase family. In terms of assembly, homooctamer; tetramer of dimers.

The protein localises to the cytoplasm. It catalyses the reaction 3-amino-2-oxopropyl phosphate + 1-deoxy-D-xylulose 5-phosphate = pyridoxine 5'-phosphate + phosphate + 2 H2O + H(+). It functions in the pathway cofactor biosynthesis; pyridoxine 5'-phosphate biosynthesis; pyridoxine 5'-phosphate from D-erythrose 4-phosphate: step 5/5. In terms of biological role, catalyzes the complicated ring closure reaction between the two acyclic compounds 1-deoxy-D-xylulose-5-phosphate (DXP) and 3-amino-2-oxopropyl phosphate (1-amino-acetone-3-phosphate or AAP) to form pyridoxine 5'-phosphate (PNP) and inorganic phosphate. This chain is Pyridoxine 5'-phosphate synthase, found in Phocaeicola vulgatus (strain ATCC 8482 / DSM 1447 / JCM 5826 / CCUG 4940 / NBRC 14291 / NCTC 11154) (Bacteroides vulgatus).